The chain runs to 287 residues: Oxaloacetate decarboxylase (287 aa).

Substrate is bound at residue Ser-50. Asp-88 serves as a coordination point for Mg(2+). 2 residues coordinate substrate: Arg-159 and His-235.

The protein belongs to the isocitrate lyase/PEP mutase superfamily. Oxaloacetate decarboxylase family. In terms of assembly, homotetramer; dimer of dimers. It depends on Mg(2+) as a cofactor.

It carries out the reaction oxaloacetate + H(+) = pyruvate + CO2. Catalyzes the decarboxylation of oxaloacetate into pyruvate. Seems to play a role in maintaining cellular concentrations of bicarbonate and pyruvate. The protein is Oxaloacetate decarboxylase of Chromohalobacter salexigens (strain ATCC BAA-138 / DSM 3043 / CIP 106854 / NCIMB 13768 / 1H11).